A 208-amino-acid polypeptide reads, in one-letter code: Protein-L-isoaspartate O-methyltransferase (208 aa).

Residue serine 59 is part of the active site.

It belongs to the methyltransferase superfamily. L-isoaspartyl/D-aspartyl protein methyltransferase family.

Its subcellular location is the cytoplasm. The catalysed reaction is [protein]-L-isoaspartate + S-adenosyl-L-methionine = [protein]-L-isoaspartate alpha-methyl ester + S-adenosyl-L-homocysteine. Functionally, catalyzes the methyl esterification of L-isoaspartyl residues in peptides and proteins that result from spontaneous decomposition of normal L-aspartyl and L-asparaginyl residues. It plays a role in the repair and/or degradation of damaged proteins. This chain is Protein-L-isoaspartate O-methyltransferase, found in Klebsiella pneumoniae subsp. pneumoniae (strain ATCC 700721 / MGH 78578).